A 519-amino-acid chain; its full sequence is Mannuronan C5-epimerase (519 aa).

Positions Met1 to Ala25 are cleaved as a signal peptide. PbH1 repeat units lie at residues Gly219–Gln246, Thr281–Asp303, Ser305–Arg328, Val330–Arg352, Ser354–Glu376, and Ser377–Asn399. His302 functions as the Proton acceptor in the catalytic mechanism.

This sequence belongs to the D-mannuronate C5-epimerase family.

It is found in the periplasm. The enzyme catalyses [(1-&gt;4)-beta-D-mannuronosyl](n) = [alginate](n). The protein operates within glycan biosynthesis; alginate biosynthesis. Catalyzes the epimerization of beta-D-mannuronate to alpha-L-guluronate during the synthesis of the linear polysaccharide alginate. In addition, is part of a periplasmic protein complex that protects alginate from degradation by AlgL by channeling the newly formed alginate polymer through a scaffold that transfers the alginate polymer through the periplasmic space to the outer membrane secretin AlgE. The sequence is that of Mannuronan C5-epimerase (algG) from Pseudomonas putida (strain ATCC 47054 / DSM 6125 / CFBP 8728 / NCIMB 11950 / KT2440).